The sequence spans 104 residues: Elicitor peptide 6 (104 aa).

Residues 1–81 (MEVNGEEERR…TVEETGFMAR (81 aa)) constitute a propeptide that is removed on maturation. A compositionally biased stretch (low complexity) spans 48 to 61 (SSSIPPSSSSSSPS). Residues 48-104 (SSSIPPSSSSSSPSLVEEEDSGTETVEETGFMARITAVLRRRPRPPPYSSGRPGQNN) form a disordered region. The span at 63 to 74 (VEEEDSGTETVE) shows a compositional bias: acidic residues.

This sequence belongs to the brassicaceae elicitor peptide family.

Functionally, elicitor of plant defense. This chain is Elicitor peptide 6 (PEP6), found in Arabidopsis thaliana (Mouse-ear cress).